The following is a 943-amino-acid chain: MSNTTVEQFAAELKRPVEDLLKQLKEAGVSKNSGSDSLTLDDKQLLNAYLTKKNGSNGGTISIRRTKTEVSTVDGVKVETRKRGRTVNIPSAEELAAQVKAAQTQAAPVQPEQTAEDAVKARAEAAARAEARAKAEAEAAKLKAAKAGNKAKPAAQKPTEAKAETAPVAAETKPAEPKEKAVKPKHERNGKGKDAKKPAKPAAPAVPQPVVSAEEQAQRDEEARRAAALRAHQEALLKEKQERQARREAMKQQAEQQAKAAQEAKTGRQRPAKPAEKPQAAAPAVENKPVNPAKAKKEDRRNRDDEGQGRNAKGKGAKGGRDRNNARNGGDERVRGGKKGKKLKLEPNQHAFQAPTEPVVHEVLVPETITVADLAHKMAVKGVEMVKALMKKGMMVTINQSIDQDTALIVVKKLGHIGKPAAADDPEAFLGEGAEAEEAEALPRPPVVTVMGHVDHGKTSLLDYIRRAKVVQGEAGGITQHIGAYHVKTPRGVITFLDTPGHEAFTAMRARGAKATDIVILVVAADDGVMPQTIEAIAHAKAAGVPIVVAVNKIDKDTANPERIRQELTQHEVIPDDWGGTVQFIDVSAKKGTNIDALLEAVLLEAEVLELTAPVDAPAKGIIVEARLDKGRGAVATLLVQNGTLKKGDMLLAGTAFGKIRAMVDENGKSITEAGPSIPVEILGLSDVPNAGEDAMVLADEKKAREIALFRQGKYRDVRLAKQQAAKLENMFNNMGETQAQSLSVIIKADVQGSYEALAGSLKKLSADEVKVNVLHSGVGGITESDVNLAIASGAFIIGFNVRADASSRKLAENENVEIRYYNIIYDAIDDVKAAMSGMLSPEKKEQVTGTVEIRQVISVSKVGNIAGCMVTDGVVKRDSHIRLIRNNVVIHTGELASLKRYKDDVKEVRMGFECGLMLKGYNEIMEGDQLECFDIVEVARTL.

A compositionally biased stretch (low complexity) spans 99–113 (VKAAQTQAAPVQPEQ). A disordered region spans residues 99-354 (VKAAQTQAAP…LEPNQHAFQA (256 aa)). Residues 117–141 (DAVKARAEAAARAEARAKAEAEAAK) show a composition bias toward basic and acidic residues. Residues 145-172 (AKAGNKAKPAAQKPTEAKAETAPVAAET) show a composition bias toward low complexity. The span at 173 to 197 (KPAEPKEKAVKPKHERNGKGKDAKK) shows a compositional bias: basic and acidic residues. Residues 200 to 215 (KPAAPAVPQPVVSAEE) show a composition bias toward low complexity. Positions 216–250 (QAQRDEEARRAAALRAHQEALLKEKQERQARREAM) are enriched in basic and acidic residues. The span at 251–264 (KQQAEQQAKAAQEA) shows a compositional bias: low complexity. 2 stretches are compositionally biased toward basic and acidic residues: residues 295–308 (AKKE…DEGQ) and 319–335 (GGRD…ERVR). Positions 443–612 (PRPPVVTVMG…LLEAEVLELT (170 aa)) constitute a tr-type G domain. The G1 stretch occupies residues 452-459 (GHVDHGKT). 452 to 459 (GHVDHGKT) contacts GTP. The tract at residues 477 to 481 (GITQH) is G2. The interval 498–501 (DTPG) is G3. GTP contacts are provided by residues 498-502 (DTPGH) and 552-555 (NKID). A G4 region spans residues 552-555 (NKID). The G5 stretch occupies residues 588 to 590 (SAK).

Belongs to the TRAFAC class translation factor GTPase superfamily. Classic translation factor GTPase family. IF-2 subfamily.

It is found in the cytoplasm. Its function is as follows. One of the essential components for the initiation of protein synthesis. Protects formylmethionyl-tRNA from spontaneous hydrolysis and promotes its binding to the 30S ribosomal subunits. Also involved in the hydrolysis of GTP during the formation of the 70S ribosomal complex. This chain is Translation initiation factor IF-2, found in Neisseria gonorrhoeae (strain ATCC 700825 / FA 1090).